Consider the following 154-residue polypeptide: Transcriptional repressor NrdR (154 aa).

A zinc finger lies at 3–34 (CPFCGHSNTQVLDTRMSEDGDAVRRRRRCEAC). The ATP-cone domain occupies 49–139 (PAIVKKNGSR…VYRSFEDVAE (91 aa)).

Belongs to the NrdR family. It depends on Zn(2+) as a cofactor.

Functionally, negatively regulates transcription of bacterial ribonucleotide reductase nrd genes and operons by binding to NrdR-boxes. The protein is Transcriptional repressor NrdR of Cupriavidus pinatubonensis (strain JMP 134 / LMG 1197) (Cupriavidus necator (strain JMP 134)).